Reading from the N-terminus, the 228-residue chain is UPF0173 metal-dependent hydrolase lmo1577 (228 aa).

It belongs to the UPF0173 family.

The protein is UPF0173 metal-dependent hydrolase lmo1577 of Listeria monocytogenes serovar 1/2a (strain ATCC BAA-679 / EGD-e).